Consider the following 859-residue polypeptide: Outer membrane usher protein AfaC (859 aa).

Positions 1-28 (MRDTSSGRMRTGVTGLALAVMVACVMFR) are cleaved as a signal peptide.

This sequence belongs to the fimbrial export usher family.

Its subcellular location is the cell outer membrane. Its function is as follows. Involved in the export and assembly of AFA-III afimbrial adhesin subunits across the outer membrane. This Escherichia coli protein is Outer membrane usher protein AfaC (afaC).